The primary structure comprises 227 residues: Prolactin-4A1 (227 aa).

A signal peptide spans methionine 1 to alanine 31. 2 disulfides stabilise this stretch: cysteine 87/cysteine 203 and cysteine 220/cysteine 227. Residue asparagine 175 is glycosylated (N-linked (GlcNAc...) asparagine).

This sequence belongs to the somatotropin/prolactin family. As to expression, expressed specifically in placenta. Expressed in both trophoblast giant cells and spongiotrophoblast cells.

It localises to the secreted. This Mus musculus (Mouse) protein is Prolactin-4A1 (Prl4a1).